The following is a 442-amino-acid chain: UDP-N-acetylmuramate--L-alanine ligase (442 aa).

Residue 110–116 coordinates ATP; it reads GAHGKTS.

It belongs to the MurCDEF family.

The protein resides in the cytoplasm. It catalyses the reaction UDP-N-acetyl-alpha-D-muramate + L-alanine + ATP = UDP-N-acetyl-alpha-D-muramoyl-L-alanine + ADP + phosphate + H(+). It participates in cell wall biogenesis; peptidoglycan biosynthesis. Its function is as follows. Cell wall formation. In Streptococcus thermophilus (strain ATCC BAA-491 / LMD-9), this protein is UDP-N-acetylmuramate--L-alanine ligase.